Here is a 219-residue protein sequence, read N- to C-terminus: Small ribosomal subunit protein uS3c (219 aa).

In terms of domain architecture, KH type-2 spans 47-118; it reads IKKNIRISSG…KINIAITRIT (72 aa).

Belongs to the universal ribosomal protein uS3 family. In terms of assembly, part of the 30S ribosomal subunit.

Its subcellular location is the plastid. The protein localises to the chloroplast. The protein is Small ribosomal subunit protein uS3c (rps3) of Citrus sinensis (Sweet orange).